Here is an 88-residue protein sequence, read N- to C-terminus: C-C motif chemokine 18 (88 aa).

A signal peptide spans 1-19 (MKGLAAALLVLCTVALCSC). 2 disulfide bridges follow: C29–C53 and C30–C69.

The protein belongs to the intercrine beta (chemokine CC) family. The Cys-29/Cys-53 disulfide bond is required for activity.

The protein resides in the secreted. Its function is as follows. Chemotactic factor that attracts lymphocytes but not monocytes or granulocytes. May be involved in B-cell migration into B-cell follicles in lymph nodes. Attracts naive T-lymphocytes toward dendritic cells and activated macrophages in lymph nodes, has chemotactic activity for naive T-cells, CD4+ and CD8+ T-cells and thus may play a role in both humoral and cell-mediated immunity responses. The chain is C-C motif chemokine 18 (CCL18) from Macaca mulatta (Rhesus macaque).